A 379-amino-acid polypeptide reads, in one-letter code: Armadillo repeat-containing X-linked protein 3 (379 aa).

The Mitochondrial intermembrane segment spans residues 1 to 6 (MGYARK). 2 mitochondrion outer membrane (MOM)-targeting sequence regions span residues 1–6 (MGYARK) and 26–37 (RLTRGRKQNKEK). Residues 7-29 (VGWVTAGLVIGAGACYCIYRLTR) form a helical; Signal-anchor membrane-spanning segment. Topologically, residues 30-379 (GRKQNKEKMA…TERMFPKSQE (350 aa)) are cytoplasmic. 3 positions are modified to phosphoserine: serine 61, serine 67, and serine 72. The tract at residues 89-98 (RARARARARA) is nuclear localization signal. A compositionally biased stretch (basic residues) spans 95 to 106 (RARATRARRAVQ). The segment at 95–116 (RARATRARRAVQKRASPNSDDT) is disordered. Position 110 is a phosphoserine (serine 110). ARM repeat units follow at residues 111–151 (PNSD…NNAA), 153–192 (AFNR…NLSV), and 233–272 (VTNE…NLAE).

The protein belongs to the eutherian X-chromosome-specific Armcx family. In terms of assembly, interacts (via ARM domain) with MIRO1, MIRO2 and TRAK2. The interaction with Miro is calcium-dependent. Interacts with Sox10. As to expression, highly expressed in the developing neural tissues, neural crest derivatives and hind limbs. Also widely expressed in the adult nervous tissue, especially in the forebrain, including the cerebral cortex, hippocampus and thalamus.

It is found in the mitochondrion outer membrane. Its subcellular location is the cytoplasm. The protein localises to the nucleus. Regulates mitochondrial aggregation and transport in axons in living neurons. May link mitochondria to the Trak2-kinesin motor complex via its interaction with Miro and Trak2. Mitochondrial distribution and dynamics is regulated through Armcx3 protein degradation, which is promoted by PCK and negatively regulated by Wnt1. Enhances the Sox10-mediated transactivation of the neuronal acetylcholine receptor subunit alpha-3 and beta-4 subunit gene promoters. In Mus musculus (Mouse), this protein is Armadillo repeat-containing X-linked protein 3 (Armcx3).